The primary structure comprises 324 residues: Probable metal transport system membrane protein CPn_0346/CP_0414/CPj0346/CpB0353 (324 aa).

Helical transmembrane passes span 1-21, 39-59, 64-84, 94-114, 125-145, 165-185, 201-221, 226-246, 252-272, and 286-306; these read MALG…SVFF, IQII…TFLV, AMYA…VCLF, GTLT…IYFI, STAL…VFMT, EDIF…IFAF, LGIP…ACLV, AVGV…AKVI, SLMA…PASS, and SGIS…ISYF.

It belongs to the ABC-3 integral membrane protein family.

The protein localises to the cell inner membrane. Part of an ATP-driven transport system CPn_0346/CPn_0347/CPn_0348/CPn_0349 for a metal. This is Probable metal transport system membrane protein CPn_0346/CP_0414/CPj0346/CpB0353 from Chlamydia pneumoniae (Chlamydophila pneumoniae).